The chain runs to 93 residues: Small ribosomal subunit protein uS19 (93 aa).

It belongs to the universal ribosomal protein uS19 family.

Its function is as follows. Protein S19 forms a complex with S13 that binds strongly to the 16S ribosomal RNA. This is Small ribosomal subunit protein uS19 from Leptospira interrogans serogroup Icterohaemorrhagiae serovar copenhageni (strain Fiocruz L1-130).